The sequence spans 325 residues: Phage-like element PBSX protein XkdQ (325 aa).

This sequence to B.subtilis YqbQ.

The sequence is that of Phage-like element PBSX protein XkdQ (xkdQ) from Bacillus subtilis (strain 168).